The chain runs to 122 residues: MSNIYANSYLIVFVFLCLGVLLPIGALTIGRWLRPNVPDEAKATTYESGNIPFHDSRIQFQVRYYLFALLFVIFDVETVFLYPWAVVYDQLGLFALVEMIIFIVLLAIGLIYAWKKKVLRWM.

A run of 3 helical transmembrane segments spans residues 10 to 30 (LIVFVFLCLGVLLPIGALTIG), 67 to 87 (FALLFVIFDVETVFLYPWAVV), and 91 to 111 (LGLFALVEMIIFIVLLAIGLI).

This sequence belongs to the complex I subunit 3 family. In terms of assembly, NDH-1 is composed of 14 different subunits. Subunits NuoA, H, J, K, L, M, N constitute the membrane sector of the complex.

It localises to the cell membrane. The catalysed reaction is a quinone + NADH + 5 H(+)(in) = a quinol + NAD(+) + 4 H(+)(out). Functionally, NDH-1 shuttles electrons from NADH, via FMN and iron-sulfur (Fe-S) centers, to quinones in the respiratory chain. The immediate electron acceptor for the enzyme in this species is believed to be a menaquinone. Couples the redox reaction to proton translocation (for every two electrons transferred, four hydrogen ions are translocated across the cytoplasmic membrane), and thus conserves the redox energy in a proton gradient. This chain is NADH-quinone oxidoreductase subunit A, found in Geobacillus thermodenitrificans (strain NG80-2).